Here is a 367-residue protein sequence, read N- to C-terminus: MSLADSVLAVNNDLPIRTDKPVHSGKVRSVYWLTEADSARLIRERGYDVPADTPLAIMVISDRISAFDCIFHGEGDLRGIPGKGAALNAISNHWFGLFKENGLADSHILDIPHPFVWIVQKARPIKVEAIIRQYITGSMWRAYQKGERVFCGITLPEGLQKDQKLPELLITPSTKGILTGIPGVPEQDDVNISRADIEANFEAFGFEKKEDIDLYEKLLKEGFGVISEALAKLDQVFVDTKFEFGYVTDSNGNSKLIYMDEVGTPDSSRIWDGAAYRDGKIVENSKEGFRQFLLNHFPDPDILLNKDRMPEREALARDNALPLDAMMNVSRTYTGIAEKVTGRKIELSDNPKAEIIAILKEQYALVD.

The protein belongs to the SAICAR synthetase family.

It carries out the reaction 5-amino-1-(5-phospho-D-ribosyl)imidazole-4-carboxylate + L-aspartate + ATP = (2S)-2-[5-amino-1-(5-phospho-beta-D-ribosyl)imidazole-4-carboxamido]succinate + ADP + phosphate + 2 H(+). It functions in the pathway purine metabolism; IMP biosynthesis via de novo pathway; 5-amino-1-(5-phospho-D-ribosyl)imidazole-4-carboxamide from 5-amino-1-(5-phospho-D-ribosyl)imidazole-4-carboxylate: step 1/2. In Shewanella amazonensis (strain ATCC BAA-1098 / SB2B), this protein is Phosphoribosylaminoimidazole-succinocarboxamide synthase.